Here is a 120-residue protein sequence, read N- to C-terminus: Fumarate reductase subunit D (120 aa).

3 helical membrane passes run 25–45, 57–77, and 100–120; these read FAML…LGIL, GFVT…LPMW, and IACY…VFMI.

The protein belongs to the FrdD family. Part of an enzyme complex containing four subunits: a flavoprotein (FrdA), an iron-sulfur protein (FrdB), and two hydrophobic anchor proteins (FrdC and FrdD).

It is found in the cell inner membrane. Anchors the catalytic components of the fumarate reductase complex to the cell membrane, binds quinones. The chain is Fumarate reductase subunit D from Photobacterium profundum (strain SS9).